Reading from the N-terminus, the 252-residue chain is tRNA pseudouridine synthase A (252 aa).

The active-site Nucleophile is Asp-52. Tyr-111 lines the substrate pocket.

This sequence belongs to the tRNA pseudouridine synthase TruA family. In terms of assembly, homodimer.

The catalysed reaction is uridine(38/39/40) in tRNA = pseudouridine(38/39/40) in tRNA. Functionally, formation of pseudouridine at positions 38, 39 and 40 in the anticodon stem and loop of transfer RNAs. The sequence is that of tRNA pseudouridine synthase A from Parabacteroides distasonis (strain ATCC 8503 / DSM 20701 / CIP 104284 / JCM 5825 / NCTC 11152).